The sequence spans 515 residues: Rop guanine nucleotide exchange factor 12 (515 aa).

One can recognise a PRONE domain in the interval 83-446; that stretch reads QARERQLLAD…RAGNKRNTPL (364 aa). S510 bears the Phosphoserine mark.

Interacts (via C-terminus) with PRK2. Interacts with PRK6. Expressed in pollen grains.

Its subcellular location is the cytoplasm. It localises to the cell membrane. Its activity is regulated as follows. Phosphorylation at Ser-510 by PRK2 may release ROPGEF12 auto-inhibition, thereby activating ROPGEF12 and downstream Rop signaling. In terms of biological role, guanine-nucleotide exchange factor (GEF) that acts as an activator of Rop (Rho of plants) GTPases by promoting the exchange of GDP for GTP. May be recruited by PRK2 at the plasma membrane to maintain polar Rop activity in the pollen tube and control polarized pollen tube growth. This chain is Rop guanine nucleotide exchange factor 12, found in Arabidopsis thaliana (Mouse-ear cress).